Here is a 1060-residue protein sequence, read N- to C-terminus: MRIFSGDNKVVDSPASNPGLMSPSNFGGDFGSRLKVNVTSKKKLNDSSPTSPMESSPVSPELVPILTLLNAHTHRRYHEGVFLILQDLNNNGTHAARKWKDVYGVLLGTQLALWDAKELAEFTDPSCPVSEKKLKEVASKPTYINLTDATLRTLDNSDNIVMECGKNLTNALVVSTTLKNRYFLQFGNKESFNAWNSAIRLCLYECSSLQEAYTGAFISSRGAKLGDIRILLTNRKYDYKDWVSVRFGAGMPWKRCYAVISQSSSKKKGHFGEINLYENDKKVKKNHAMATIVEAKALYAVYPSSPKLIDSSTIIKVVGSVKFEKKESAQEKDVFIMPEKHQAVPSYDTIIRFLIPAMDTFKLYGRPEKLLSSKNDPHSLLFGLPVLPHIYYLEVEDLLPLTNSVSSLHWSNNEWKEHISDILQRKIAQGYCGCNSTSNITSPLPSPFLGSADLFERADGVLSPKLSYGSKSSSNNSSKNSLPKRERVKLSSSSEQDLNNSDSPSIKRESPPLVISESPHKVHTPTDASFRTRVTEGSPYAKQRHPKAFASSVNDSPSDRAKSRTVPYNNNDRKATTPEKFERGETSCGKNVDESLKKVRNMKLEIPESNFDKFMTDKNLLSVDSKSSNEKKLSVESDLSAIYEKYSNGPFGHTEGLNGSSDETYLRFQRASVHSESNYNSRKSFTPSDFSNGNEEEHAVLQELNSLTQRINELGMESINSNSDSDRINGSYSQVDFDNNNDEDDMNLFDPDFMAQDQLRAEERDYNKDDRTPLAKVPAAFQSTGLGITPDDDIERQYITEHRSRHEVPKRSPEKPSNPLEIGNPYAKPGTRLNTTHTHSKTDRSITPQRGQPVPSGQQISSYVQPANINSPNKMYGANNSAMGSPRNPKTRAPPGPYNQGWNNRPSPSNIYQRPHPSDTQPQAYHLPGNPYSTGNRPNMQAQYHPQQVPMPIPQQPNRPYQPYAMNTHMGSPGGYAGAAPPFQPANVNYNTRPQQPWPTPNSPSAHYRPPPNLNQPQNGSAGYYRPPAPQLQNSQARPQKKDGFSQFMPSATTKNPYAQ.

A disordered region spans residues 1 to 29 (MRIFSGDNKVVDSPASNPGLMSPSNFGGD). One can recognise a PH domain in the interval 75-204 (RRYHEGVFLI…WNSAIRLCLY (130 aa)). Low complexity predominate over residues 465–481 (KLSYGSKSSSNNSSKNS). 3 disordered regions span residues 465–588 (KLSY…ETSC), 718–742 (SINS…NNND), and 801–1060 (EHRS…PYAQ). Positions 490-504 (LSSSSEQDLNNSDSP) are enriched in polar residues. Residues Ser491, Ser510, Ser518, Ser538, and Ser556 each carry the phosphoserine modification. Residues 571–588 (NDRKATTPEKFERGETSC) are compositionally biased toward basic and acidic residues. The segment covering 718–731 (SINSNSDSDRINGS) has biased composition (low complexity). The segment covering 801–814 (EHRSRHEVPKRSPE) has biased composition (basic and acidic residues). The segment covering 845–883 (SITPQRGQPVPSGQQISSYVQPANINSPNKMYGANNSAM) has biased composition (polar residues). A phosphoserine mark is found at Ser871 and Ser885. 3 stretches are compositionally biased toward polar residues: residues 900–923 (QGWN…TQPQ), 931–945 (PYST…AQYH), and 1048–1060 (FMPS…PYAQ).

It belongs to the CAF120 family. Subunit of the 1.0 MDa CCR4-NOT core complex that contains CCR4, CAF1, CAF120, NOT1, NOT2, NOT3, NOT4, NOT5, CAF40 and CAF130. In the complex interacts with NOT1. The core complex probably is part of a less characterized 1.9 MDa CCR4-NOT complex.

Its subcellular location is the cytoplasm. It is found in the nucleus. It localises to the bud neck. Functionally, acts as a component of the CCR4-NOT core complex, which in the nucleus seems to be a general transcription factor, and in the cytoplasm the major mRNA deadenylase involved in mRNA turnover. The NOT protein subcomplex negatively regulates the basal and activated transcription of many genes. Preferentially affects TC-type TATA element-dependent transcription. Could directly or indirectly inhibit component(s) of the general transcription machinery. This is CCR4-NOT transcriptional complex subunit CAF120 (CAF120) from Saccharomyces cerevisiae (strain YJM789) (Baker's yeast).